A 486-amino-acid chain; its full sequence is MNAPESVQAKPRKRYDAGVMKYKEMGYWDGDYEPKDTDLLALFRITPQDGVDPVEAAAAVAGESSTATWTVVWTDRLTACDMYRAKAYRVDPVPNNPEQFFCYVAYDLSLFEEGSIANLTASIIGNVFSFKPIKAARLEDMRFPVAYVKTFAGPSTGIIVERERLDKFGRPLLGATTKPKLGLSGRNYGRVVYEGLKGGLDFMKDDENINSQPFMHWRDRFLFVMDAVNKASAATGEVKGSYLNVTAGTMEEMYRRAEFAKSLGSVVIMIDLIVGWTCIQSMSNWCRQNDMILHLHRAGHGTYTRQKNHGVSFRVIAKWLRLAGVDHMHTGTAVGKLEGDPLTVQGYYNVCRDAYTHTDLTRGLFFDQDWASLRKVMPVASGGIHAGQMHQLIHLFGDDVVLQFGGGTIGHPQGIQAGATANRVALEAMVLARNEGRDILNEGPEILRDAARWCGPLRAALDTWGDISFNYTPTDTSDFAPTASVA.

2 residues coordinate substrate: asparagine 126 and threonine 176. The active-site Proton acceptor is the lysine 178. Position 180 (lysine 180) interacts with substrate. Lysine 204, aspartate 206, and glutamate 207 together coordinate Mg(2+). N6-carboxylysine is present on lysine 204. Histidine 296 serves as the catalytic Proton acceptor. 3 residues coordinate substrate: arginine 297, histidine 329, and serine 381.

This sequence belongs to the RuBisCO large chain family. Type I subfamily. As to quaternary structure, heterohexadecamer of 8 large chains and 8 small chains. Mg(2+) serves as cofactor.

The enzyme catalyses 2 (2R)-3-phosphoglycerate + 2 H(+) = D-ribulose 1,5-bisphosphate + CO2 + H2O. The catalysed reaction is D-ribulose 1,5-bisphosphate + O2 = 2-phosphoglycolate + (2R)-3-phosphoglycerate + 2 H(+). In terms of biological role, ruBisCO catalyzes two reactions: the carboxylation of D-ribulose 1,5-bisphosphate, the primary event in carbon dioxide fixation, as well as the oxidative fragmentation of the pentose substrate. Both reactions occur simultaneously and in competition at the same active site. This Cupriavidus necator (strain ATCC 17699 / DSM 428 / KCTC 22496 / NCIMB 10442 / H16 / Stanier 337) (Ralstonia eutropha) protein is Ribulose bisphosphate carboxylase large chain, plasmid (cbbL2).